We begin with the raw amino-acid sequence, 443 residues long: 3-phosphoshikimate 1-carboxyvinyltransferase (443 aa).

3-phosphoshikimate is bound by residues Lys-24, Ser-25, and Arg-29. Lys-24 provides a ligand contact to phosphoenolpyruvate. Positions 96 and 124 each coordinate phosphoenolpyruvate. 4 residues coordinate 3-phosphoshikimate: Ser-168, Gln-170, Asp-316, and Lys-343. Residue Gln-170 coordinates phosphoenolpyruvate. Asp-316 (proton acceptor) is an active-site residue. Residues Arg-347 and Arg-391 each coordinate phosphoenolpyruvate.

Belongs to the EPSP synthase family. Monomer.

The protein resides in the cytoplasm. The enzyme catalyses 3-phosphoshikimate + phosphoenolpyruvate = 5-O-(1-carboxyvinyl)-3-phosphoshikimate + phosphate. Its pathway is metabolic intermediate biosynthesis; chorismate biosynthesis; chorismate from D-erythrose 4-phosphate and phosphoenolpyruvate: step 6/7. In terms of biological role, catalyzes the transfer of the enolpyruvyl moiety of phosphoenolpyruvate (PEP) to the 5-hydroxyl of shikimate-3-phosphate (S3P) to produce enolpyruvyl shikimate-3-phosphate and inorganic phosphate. This Dichelobacter nodosus (Bacteroides nodosus) protein is 3-phosphoshikimate 1-carboxyvinyltransferase.